A 379-amino-acid polypeptide reads, in one-letter code: MATAGKVIKCKAAVAWEAGKPLSIEEVEVAPPQAMEVRVKILFTSLCHTDVYFWEAKGQTPVFPRIFGHEAGGIIESVGEGVTDVAPGDHVLPVFTGECKECAHCKSAESNMCDLLRINTDRGVMIADGKSRFSINGKPIYHFVGTSTFSEYTVMHVGCVAKINPQAPLDKVCVLSCGYSTGLGASINVAKPPKGSTVAVFGLGAVGLAAAEGARIAGASRIIGVDLNPSRFEEARKFGCTEFVNPKDHNKPVQEVLAEMTNGGVDRSVECTGNINAMIQAFECVHDGWGVAVLVGVPHKDAEFKTHPMNFLNERTLKGTFFGNYKPRTDLPNVVELYMKKELEVEKFITHSVPFAEINKAFDLMAKGEGIRCIIRMEN.

8 residues coordinate Zn(2+): cysteine 47, threonine 49, histidine 69, cysteine 99, cysteine 102, cysteine 105, cysteine 113, and cysteine 177. The an alcohol site is built by threonine 49 and histidine 69. Threonine 49 is an NAD(+) binding site. NAD(+)-binding positions include 202 to 207 (GLGAVG), aspartate 226, arginine 231, threonine 272, valine 295, 295 to 297 (VGV), phenylalanine 322, and arginine 372.

Belongs to the zinc-containing alcohol dehydrogenase family. As to quaternary structure, homodimer. Requires Zn(2+) as cofactor.

Its subcellular location is the cytoplasm. The enzyme catalyses a primary alcohol + NAD(+) = an aldehyde + NADH + H(+). It catalyses the reaction a secondary alcohol + NAD(+) = a ketone + NADH + H(+). This chain is Alcohol dehydrogenase 1 (ADH1), found in Zea mays (Maize).